A 320-amino-acid chain; its full sequence is GRAM domain-containing protein 2A (320 aa).

A disordered region spans residues 33 to 56 (TEKPGKVQEPPDDGSLHWSEGSKG). The 68-residue stretch at 74 to 141 (QQYHKLFKDI…VSVQLIKKHK (68 aa)) folds into the GRAM domain. The chain crosses the membrane as a helical span at residues 278-298 (LLKVIFVMICFLVLSSSYLAF).

Phosphorylated.

It localises to the endoplasmic reticulum membrane. It is found in the cell membrane. In terms of biological role, participates in the organization ofendoplasmic reticulum-plasma membrane contact sites (EPCS) with pleiotropic functions including STIM1 recruitment and calcium homeostasis. Constitutive tether that co-localize with ESYT2/3 tethers at endoplasmic reticulum-plasma membrane contact sites in a phosphatidylinositol lipid-dependent manner. Pre-marks the subset of phosphtidylinositol 4,5-biphosphate (PI(4,5)P2)-enriched EPCS destined for the store operated calcium entry pathway (SOCE). In Mus musculus (Mouse), this protein is GRAM domain-containing protein 2A.